We begin with the raw amino-acid sequence, 332 residues long: RNA polymerase principal sigma factor HrdD (332 aa).

The segment covering 1 to 11 has biased composition (basic residues); it reads MATRAVARRKS. The tract at residues 1–25 is disordered; that stretch reads MATRAVARRKSAAGETSGSATSVRA. The segment covering 13–22 has biased composition (low complexity); it reads AGETSGSATS. A Polymerase core binding motif is present at residues 124–137; the sequence is DLIQEGNAGLVRAV. Residues 294-313 constitute a DNA-binding region (H-T-H motif); sequence LTEVGKEHGLTRERIRQIEK.

This sequence belongs to the sigma-70 factor family. As to quaternary structure, interacts transiently with the RNA polymerase catalytic core.

Its function is as follows. Sigma factors are initiation factors that promote the attachment of RNA polymerase to specific initiation sites and are then released. This Streptomyces coelicolor (strain ATCC BAA-471 / A3(2) / M145) protein is RNA polymerase principal sigma factor HrdD (hrdD).